The sequence spans 529 residues: L-ornithine N(5)-monooxygenase (529 aa).

FAD-binding positions include 100 to 108 and Q119; that span reads EKQPQFAWH. A substrate-binding site is contributed by K124. V185 serves as a coordination point for FAD. Residue 270–273 participates in NADP(+) binding; sequence NGQS. Substrate is bound by residues 309–312 and N339; that span reads NEIF. 339 to 341 lines the NADP(+) pocket; sequence NYG. An FAD-binding site is contributed by 493–495; it reads TLL. S496 lines the substrate pocket.

The protein belongs to the lysine N(6)-hydroxylase/L-ornithine N(5)-oxygenase family. As to quaternary structure, homotetramer. Requires FAD as cofactor.

The enzyme catalyses L-ornithine + NADPH + O2 = N(5)-hydroxy-L-ornithine + NADP(+) + H2O. It carries out the reaction L-ornithine + NADH + O2 = N(5)-hydroxy-L-ornithine + NAD(+) + H2O. It participates in siderophore biosynthesis. Its function is as follows. L-ornithine N(5)-monooxygenase; part of the gene cluster that mediates the biosynthesis of hydroxamate-containing siderophores that play a critical role in virulence. Cochliobolus heterostrophus produces extracellular coprogen-type siderophores including coprogen, neocoprogen I and neocoprogen II, as well as the intracellular siderophore ferricrocin. The role of extracellular siderophores is to supply iron to their producers in planta and the intracellular ferricrocin is required for intracellular iron distribution and storage with a crucial role in ascus and ascospore development. SIDA2 catalyzes the conversion of L-ornithine to N(5)-hydroxyornithine, the first step in the biosynthesis of all hydroxamate-containing siderophores. The assembly of extracellular coprogen-type siderophores is then performed by the nonribosomal peptide synthetase (NRPS) NPS6 whereas the intracellular siderophore ferricrocin is assembled by NPS2. This Cochliobolus heterostrophus (strain C4 / ATCC 48331 / race T) (Southern corn leaf blight fungus) protein is L-ornithine N(5)-monooxygenase.